Reading from the N-terminus, the 129-residue chain is Large ribosomal subunit protein bL32m (129 aa).

A mitochondrion-targeting transit peptide spans 1 to 63; that stretch reads MAAMTAAAAA…LEDIWEGILR (63 aa). 4 residues coordinate Zn(2+): Cys-94, Cys-97, Cys-107, and Cys-110.

It belongs to the bacterial ribosomal protein bL32 family. As to quaternary structure, component of the mitochondrial large ribosomal subunit (mt-LSU). Mature N.crassa 74S mitochondrial ribosomes consist of a small (37S) and a large (54S) subunit. The 37S small subunit contains a 16S ribosomal RNA (16S mt-rRNA) and 32 different proteins. The 54S large subunit contains a 23S rRNA (23S mt-rRNA) and 42 different proteins. bL32m has a zinc binding site. Post-translationally, MRPL32 precursor is processed by the m-AAA protease (composed of YTA12/RCA1 and YTA10/AFG3), which cleaves the N-terminal transit peptide. Cleavage by the m-AAA protease takes place prior to assembly into the large subunit, an essential step for mitochondrial ribosome (mitoribosome) assembly. Proper processing by the m-AAA protease is dependent on the zinc-binding region within the tightly folded C-terminal domain of MRPL32: zinc-dependent folding halts degradation initiated from the N-terminus and triggers the release of mature MRPL32.

Its subcellular location is the mitochondrion. In terms of biological role, component of the mitochondrial ribosome (mitoribosome), a dedicated translation machinery responsible for the synthesis of mitochondrial genome-encoded proteins, including at least some of the essential transmembrane subunits of the mitochondrial respiratory chain. The mitoribosomes are attached to the mitochondrial inner membrane and translation products are cotranslationally integrated into the membrane. This is Large ribosomal subunit protein bL32m (mrpl32) from Neurospora crassa (strain ATCC 24698 / 74-OR23-1A / CBS 708.71 / DSM 1257 / FGSC 987).